A 468-amino-acid polypeptide reads, in one-letter code: Putative proline/betaine transporter (468 aa).

12 helical membrane passes run 20 to 42 (VFAT…YTTA), 63 to 83 (FAAL…FGII), 91 to 111 (VVLT…GVLP), 115 to 135 (MIGL…GFST), 164 to 184 (IGTL…SFFL), 191 to 211 (AWGW…GLYL), 246 to 266 (ILVC…VTAY), 284 to 304 (VLIT…GKLA), 312 to 332 (VFLI…SLLN), 336 to 356 (LPFI…YEAT), 376 to 396 (VTFN…NSWL), and 403 to 423 (IYAP…VIAV).

Belongs to the major facilitator superfamily. Metabolite:H+ Symporter (MHS) family (TC 2.A.1.6) family.

It localises to the cell membrane. Functionally, may be a proton symporter involved in the uptake of osmolytes such as proline and glycine betaine. This Staphylococcus haemolyticus (strain JCSC1435) protein is Putative proline/betaine transporter (proP).